The sequence spans 142 residues: Hemoglobin subunit beta-1 (142 aa).

The 141-residue stretch at 2 to 142 (SLTDEEIRLI…VTEALSCQYH (141 aa)) folds into the Globin domain. Residues histidine 59 and histidine 88 each coordinate heme b.

This sequence belongs to the globin family. In terms of assembly, heterotetramer of two alpha chains and two beta chains. In terms of tissue distribution, red blood cells.

Its function is as follows. Involved in oxygen transport from the lung to the various peripheral tissues. This chain is Hemoglobin subunit beta-1 (HBB1), found in Torpedo marmorata (Marbled electric ray).